We begin with the raw amino-acid sequence, 80 residues long: ATP synthase F(1) complex subunit delta, mitochondrial (80 aa).

The N-terminal 22 residues, 1-22 (MLPATLLRXSGLGRVVRQARAY), are a transit peptide targeting the mitochondrion.

The protein belongs to the ATPase epsilon chain family. In terms of assembly, component of the ATP synthase complex composed at least of ATP5F1A/subunit alpha, ATP5F1B/subunit beta, ATP5MC1/subunit c (homooctomer), MT-ATP6/subunit a, MT-ATP8/subunit 8, ATP5ME/subunit e, ATP5MF/subunit f, ATP5MG/subunit g, ATP5MK/subunit k, ATP5MJ/subunit j, ATP5F1C/subunit gamma, ATP5F1D/subunit delta, ATP5F1E/subunit epsilon, ATP5PF/subunit F6, ATP5PB/subunit b, ATP5PD/subunit d, ATP5PO/subunit OSCP. ATP synthase complex consists of a soluble F(1) head domain (subunits alpha(3) and beta(3)) - the catalytic core - and a membrane F(0) domain - the membrane proton channel (subunits c, a, 8, e, f, g, k and j). These two domains are linked by a central stalk (subunits gamma, delta, and epsilon) rotating inside the F1 region and a stationary peripheral stalk (subunits F6, b, d, and OSCP). Component of a complex composed at least by ATPIF1, ATP5F1A, ATP5F1B, ATP5F1C AND ATP5F1E.

The protein resides in the mitochondrion. The protein localises to the mitochondrion inner membrane. Its function is as follows. Subunit delta, of the mitochondrial membrane ATP synthase complex (F(1)F(0) ATP synthase or Complex V) that produces ATP from ADP in the presence of a proton gradient across the membrane which is generated by electron transport complexes of the respiratory chain. ATP synthase complex consist of a soluble F(1) head domain - the catalytic core - and a membrane F(1) domain - the membrane proton channel. These two domains are linked by a central stalk rotating inside the F(1) region and a stationary peripheral stalk. During catalysis, ATP synthesis in the catalytic domain of F(1) is coupled via a rotary mechanism of the central stalk subunits to proton translocation. In vivo, can only synthesize ATP although its ATP hydrolase activity can be activated artificially in vitro. With the central stalk subunit gamma, is essential for the biogenesis of F(1) catalytic part of the ATP synthase complex namely in the formation of F1 assembly intermediate. The protein is ATP synthase F(1) complex subunit delta, mitochondrial of Sus scrofa (Pig).